Reading from the N-terminus, the 196-residue chain is NADH dehydrogenase [ubiquinone] 1 alpha subcomplex assembly factor 3 (196 aa).

A mitochondrion-targeting transit peptide spans 1 to 93 (MIARTLRTVG…RSVLSWNVNS (93 aa)).

The protein belongs to the NDUFAF3 family. In terms of assembly, together with NdufAF4 associates with mitochondrial complex I assembly intermediates during its biogenesis.

It is found in the mitochondrion. Its function is as follows. Involved in the assembly of mitochondrial NADH:ubiquinone oxidoreductase complex (complex I). Together with NdufAF4, involved in biogenesis of complex 1 modules N, Q and P-peripheral, but not the P-distal module. Required for recruitment of the complex I assembly factor Timmdc1 to complex 1 assembly intermediates. This Drosophila melanogaster (Fruit fly) protein is NADH dehydrogenase [ubiquinone] 1 alpha subcomplex assembly factor 3.